Here is an 809-residue protein sequence, read N- to C-terminus: Endoplasmin homolog (809 aa).

Positions 1 to 18 (MRKWALSCALLLVLLLTT) are cleaved as a signal peptide. Asn111, Asp155, Asn168, and Phe200 together coordinate ATP. Asn111 is a glycosylation site (N-linked (GlcNAc...) asparagine). Residues 293–320 (VPADEEESNEEEESTTETTEEEETEDDE) show a composition bias toward acidic residues. A disordered region spans residues 293–329 (VPADEEESNEEEESTTETTEEEETEDDEEKKPKTKTV). N-linked (GlcNAc...) asparagine glycans are attached at residues Asn410, Asn450, and Asn617. Residues 766–809 (SLDLSPDAAVEEEEEVEEPEVEEKESAKQEAEEPEHEQYDKDEL) form a disordered region. Residues 774-788 (AVEEEEEVEEPEVEE) show a composition bias toward acidic residues. The span at 789 to 809 (KESAKQEAEEPEHEQYDKDEL) shows a compositional bias: basic and acidic residues. The Prevents secretion from ER motif lies at 806–809 (KDEL).

It belongs to the heat shock protein 90 family.

The protein resides in the endoplasmic reticulum lumen. Functionally, may have a molecular chaperone role in the processing of secreted materials. In Hordeum vulgare (Barley), this protein is Endoplasmin homolog.